A 297-amino-acid polypeptide reads, in one-letter code: N-acetylneuraminate lyase (297 aa).

Aceneuramate-binding residues include serine 47 and threonine 48. The active-site Proton donor is tyrosine 137. Catalysis depends on lysine 165, which acts as the Schiff-base intermediate with substrate. The aceneuramate site is built by threonine 167, glycine 189, aspartate 191, glutamate 192, and serine 208.

Belongs to the DapA family. NanA subfamily. Homotetramer.

The protein localises to the cytoplasm. It catalyses the reaction aceneuramate = aldehydo-N-acetyl-D-mannosamine + pyruvate. The protein operates within amino-sugar metabolism; N-acetylneuraminate degradation; D-fructose 6-phosphate from N-acetylneuraminate: step 1/5. Functionally, catalyzes the reversible aldol cleavage of N-acetylneuraminic acid (sialic acid; Neu5Ac) to form pyruvate and N-acetylmannosamine (ManNAc) via a Schiff base intermediate. This chain is N-acetylneuraminate lyase, found in Salmonella agona (strain SL483).